The following is a 200-amino-acid chain: Small ribosomal subunit protein uS4 (200 aa).

The interval Thr22–Lys42 is disordered. Residues Ala92–Lys152 enclose the S4 RNA-binding domain.

This sequence belongs to the universal ribosomal protein uS4 family. In terms of assembly, part of the 30S ribosomal subunit. Contacts protein S5. The interaction surface between S4 and S5 is involved in control of translational fidelity.

In terms of biological role, one of the primary rRNA binding proteins, it binds directly to 16S rRNA where it nucleates assembly of the body of the 30S subunit. Functionally, with S5 and S12 plays an important role in translational accuracy. The chain is Small ribosomal subunit protein uS4 from Bacillus thuringiensis subsp. konkukian (strain 97-27).